Here is a 586-residue protein sequence, read N- to C-terminus: Methionine--tRNA ligase, mitochondrial (586 aa).

Residues 1–46 (MLRQCARWVLTRTRFGRGCRRYGSCSPSASGDAGEARAYFTTPIFY) constitute a mitochondrion transit peptide. The 'HIGH' region signature appears at 45 to 55 (FYVNAAPHIGH). A 'KMSKS' region motif is present at residues 340–344 (KMSKS). Lys-343 serves as a coordination point for ATP.

The protein belongs to the class-I aminoacyl-tRNA synthetase family.

The protein localises to the mitochondrion matrix. It carries out the reaction tRNA(Met) + L-methionine + ATP = L-methionyl-tRNA(Met) + AMP + diphosphate. This is Methionine--tRNA ligase, mitochondrial (Mars2) from Mus musculus (Mouse).